Consider the following 61-residue polypeptide: Hepcidin (61 aa).

The tract at residues 1–24 (LQVLTEEVGSIDSPVGEHQQPGGE) is disordered. The propeptide occupies 1–34 (LQVLTEEVGSIDSPVGEHQQPGGESMRLPEHFRF). Cystine bridges form between cysteine 43-cysteine 59, cysteine 46-cysteine 49, cysteine 47-residue 55, and cysteine 50-cysteine 58.

It belongs to the hepcidin family.

It is found in the secreted. In terms of biological role, seems to act as a signaling molecule involved in the maintenance of iron homeostasis. Seems to be required in conjunction with HFE to regulate both intestinal iron absorption and iron storage in macrophages. May also have antimicrobial activity. This Oncorhynchus mykiss (Rainbow trout) protein is Hepcidin (hamp).